A 74-amino-acid polypeptide reads, in one-letter code: Anionic peptide clone 10 (74 aa).

Residues 1 to 24 form the signal peptide; the sequence is MVSKSLIVLLLVSVLVSTFFTTEA.

It belongs to the non-disulfide-bridged peptide (NDBP) superfamily. Long chain multifunctional peptide (group 2) family. In terms of tissue distribution, expressed by the venom gland.

Its subcellular location is the secreted. Its function is as follows. May be an antimicrobial peptide. This is Anionic peptide clone 10 from Tityus costatus (Brazilian scorpion).